An 840-amino-acid chain; its full sequence is Homeobox-leucine zipper protein HOX9 (840 aa).

2 disordered regions span residues 1 to 26 (MAAA…AGMD) and 135 to 160 (NPSL…DASN). Gly residues predominate over residues 12–21 (GSDGGGGGYD). The homeobox DNA-binding region spans 26–89 (DSGKYVRYTP…NRRCRDKQRK (64 aa)). Residues 86–135 (KQRKEASRLQAVNRKLTAMNKLLMEENERLQKQVSQLVHENAYMKQQLQN) are a coiled coil. The 229-residue stretch at 157–385 (DASNPSGLLT…IAQETSGEVV (229 aa)) folds into the START domain.

It belongs to the HD-ZIP homeobox family. Class III subfamily. Expressed in seedlings, roots, stems, leaf sheaths and blades and panicles.

The protein resides in the nucleus. Functionally, probable transcription factor. This Oryza sativa subsp. japonica (Rice) protein is Homeobox-leucine zipper protein HOX9 (HOX9).